A 253-amino-acid polypeptide reads, in one-letter code: Triosephosphate isomerase (253 aa).

Residue 9–11 coordinates substrate; sequence NWK. Catalysis depends on histidine 95, which acts as the Electrophile. Glutamate 167 functions as the Proton acceptor in the catalytic mechanism. Substrate-binding positions include glycine 173, serine 213, and 234 to 235; that span reads GG. Residue serine 213 is modified to Phosphoserine.

This sequence belongs to the triosephosphate isomerase family. As to quaternary structure, homodimer.

It is found in the cytoplasm. The enzyme catalyses D-glyceraldehyde 3-phosphate = dihydroxyacetone phosphate. It participates in carbohydrate biosynthesis; gluconeogenesis. It functions in the pathway carbohydrate degradation; glycolysis; D-glyceraldehyde 3-phosphate from glycerone phosphate: step 1/1. In terms of biological role, involved in the gluconeogenesis. Catalyzes stereospecifically the conversion of dihydroxyacetone phosphate (DHAP) to D-glyceraldehyde-3-phosphate (G3P). The sequence is that of Triosephosphate isomerase from Lysinibacillus sphaericus (strain C3-41).